Here is a 490-residue protein sequence, read N- to C-terminus: Betaine aldehyde dehydrogenase (490 aa).

The K(+) site is built by isoleucine 27 and aspartate 93. Residue 150 to 152 coordinates NAD(+); that stretch reads GAW. Lysine 162 functions as the Charge relay system in the catalytic mechanism. Residue 176–179 participates in NAD(+) binding; the sequence is KPSE. Valine 180 contacts K(+). An NAD(+)-binding site is contributed by 230–233; that stretch reads GTDT. Leucine 246 is a K(+) binding site. The Proton acceptor role is filled by glutamate 252. Positions 254, 286, and 387 each coordinate NAD(+). The active-site Nucleophile is cysteine 286. Cysteine 286 is subject to Cysteine sulfenic acid (-SOH). Lysine 457 and glycine 460 together coordinate K(+). Residue glutamate 464 is the Charge relay system of the active site.

It belongs to the aldehyde dehydrogenase family. As to quaternary structure, dimer of dimers. K(+) is required as a cofactor.

The enzyme catalyses betaine aldehyde + NAD(+) + H2O = glycine betaine + NADH + 2 H(+). The protein operates within amine and polyamine biosynthesis; betaine biosynthesis via choline pathway; betaine from betaine aldehyde: step 1/1. In terms of biological role, involved in the biosynthesis of the osmoprotectant glycine betaine. Catalyzes the irreversible oxidation of betaine aldehyde to the corresponding acid. This chain is Betaine aldehyde dehydrogenase, found in Pseudomonas fluorescens (strain Pf0-1).